Here is a 507-residue protein sequence, read N- to C-terminus: Dihydrolipoyllysine-residue acetyltransferase component of pyruvate dehydrogenase complex, mitochondrial (507 aa).

A Lipoyl-binding domain is found at 77–153 (HNRVALPALS…PIGKLLCIIV (77 aa)). K118 is subject to N6-lipoyllysine. Disordered stretches follow at residues 168 to 223 (DGAS…VSAS) and 248 to 270 (RILASDLSQAPAKGATSTTTQAV). The Peripheral subunit-binding (PSBD) domain occupies 221-258 (SASPFAKKLAAENGLDLSGVSGSGPGGRILASDLSQAP). Residues H480 and D484 contribute to the active site.

This sequence belongs to the 2-oxoacid dehydrogenase family. Requires (R)-lipoate as cofactor.

It localises to the mitochondrion matrix. It carries out the reaction N(6)-[(R)-dihydrolipoyl]-L-lysyl-[protein] + acetyl-CoA = N(6)-[(R)-S(8)-acetyldihydrolipoyl]-L-lysyl-[protein] + CoA. Functionally, the pyruvate dehydrogenase complex catalyzes the overall conversion of pyruvate to acetyl-CoA and CO(2). It contains multiple copies of three enzymatic components: pyruvate dehydrogenase (E1), dihydrolipoamide acetyltransferase (E2) and lipoamide dehydrogenase (E3). The protein is Dihydrolipoyllysine-residue acetyltransferase component of pyruvate dehydrogenase complex, mitochondrial of Caenorhabditis elegans.